A 167-amino-acid polypeptide reads, in one-letter code: Single-stranded DNA-binding protein 2 (167 aa).

The region spanning Met-1–Glu-104 is the SSB domain. Positions Asn-107–Phe-167 are disordered. Composition is skewed to low complexity over residues Gln-109 to Asn-118 and Ser-132 to Ser-147. The Important for interaction with partner proteins signature appears at Asp-162–Phe-167.

Homotetramer.

Its function is as follows. Plays an important role in DNA replication, recombination and repair. Binds to ssDNA and to an array of partner proteins to recruit them to their sites of action during DNA metabolism. The sequence is that of Single-stranded DNA-binding protein 2 (ssb2) from Staphylococcus aureus (strain MSSA476).